A 172-amino-acid polypeptide reads, in one-letter code: uncharacterized protein (172 aa).

An N-acetyltransferase domain is found at 12-172 (IRLRCMEDRD…IAVYERKSYN (161 aa)).

This is an uncharacterized protein from Bacillus subtilis (strain 168).